An 807-amino-acid polypeptide reads, in one-letter code: SWI/SNF complex subunit SWI3C (807 aa).

The segment at 1 to 74 (MPASEDRRGK…DPGLGIGEVV (74 aa)) is disordered. Over residues 28 to 54 (EEEDMEEEDEENNNNNNEEMDDVENAD) the composition is skewed to acidic residues. Positions 176–274 (HVLPMHSDWF…YCATAQSHPG (99 aa)) constitute an SWIRM domain. The segment at 340 to 394 (LCDSHCNHCSRPLPTVYFQSQKKGDILLCCDCFHHGRFVVGHSCLDFVRVDPMKF) adopts a ZZ-type; degenerate zinc-finger fold. Residues Cys345, Cys348, Cys368, and Cys371 each contribute to the Zn(2+) site. Residues 398 to 449 (QDGDNWTDQETLLLLEAVELYNENWVQIADHVGSKSKAQCILHFLRLPVEDG) enclose the SANT domain. 2 stretches are compositionally biased toward polar residues: residues 458 to 467 (GVTNTENPTN) and 552 to 569 (ENQQ…NGAE). 2 disordered regions span residues 458–487 (GVTN…SEQG) and 549–571 (LDGE…AEAQ). A coiled-coil region spans residues 598–656 (ADHEEREIQRLSANIVNHQLKRMELKLKQFAEIETLLMKECEQVEKTRQRFSAERARML). Composition is skewed to low complexity over residues 692 to 703 (QHQQQQASATSQ) and 726 to 739 (QQQQ…QQQQ). Disordered stretches follow at residues 692–713 (QHQQ…FSNN), 721–740 (HFMA…QQQA), and 781–807 (SINQ…LGLN). Residues 798-807 (SGSGSGLGLN) show a composition bias toward gly residues.

As to quaternary structure, heterodimer. Interacts with SWI3A, SWI3B and BRM, but not with BSH. Interacts with MORC6 and SUVH9. Expressed in roots, stems, leaves, flowers and siliques.

It is found in the nucleus. Component of a multiprotein complex equivalent of the SWI/SNF complex, an ATP-dependent chromatin-remodeling complex, which is required for the positive and negative regulation of gene expression of a large number of genes. It changes chromatin structure by altering DNA-histone contacts within a nucleosome, leading eventually to a change in nucleosome position, thus facilitating or repressing binding of gene-specific transcription factors. This is SWI/SNF complex subunit SWI3C (SWI3C) from Arabidopsis thaliana (Mouse-ear cress).